A 477-amino-acid polypeptide reads, in one-letter code: GH30 family xylanase (477 aa).

The first 19 residues, 1 to 19, serve as a signal peptide directing secretion; that stretch reads MYSLLIALLCAGTAVDAQA. N-linked (GlcNAc...) asparagine glycosylation is found at asparagine 194, asparagine 237, and asparagine 331.

The protein belongs to the glycosyl hydrolase 30 family.

Its subcellular location is the secreted. With respect to regulation, activity is enhanced by 10 mM Co(2+), Cu 2(2+) and Mn(2+) to levels as high as 44%. Partial inhibition of activity from 5 to 15% is observed in the presence of the following compouinds at a centration of 10 mM (from higher inhibition to lower): EDTA &gt; Mg(2+) &gt; urea, Zn(2+) &gt; Fe(3+). Functionally, xylanase exhibiting endo- and exo-xylanase activity. Shows the highest activity toward beechwood glucuronoxylan, which consists of a beta-1,4-linked xylose backbone decorated with the methylated form of D-glucuronic acid (MeGlcA) attached directly to the main chain at xylose C2. Also acts against wheat arabinoxylan, a xylan without MeGlcA substituents along the main chain, but the xylanase activity is about two orders of magnitude lower than that achieved in the case of beechwood xylan. Shows no activity against carob galactomannan, konjac glucomannan, or barley beta-glucan. The recombinant xylanase also exhibits an exo-activity by releasing processively disaccharide units from the non-reducing end of linear and decorated xylooligosaccharides (XOS). The protein is GH30 family xylanase of Thermothelomyces thermophilus (strain ATCC 42464 / BCRC 31852 / DSM 1799) (Sporotrichum thermophile).